Here is a 1521-residue protein sequence, read N- to C-terminus: Protein dispatched homolog 1 (1521 aa).

The span at 1 to 10 (MAVISGSDSV) shows a compositional bias: polar residues. The interval 1-55 (MAVISGSDSVLLSNGSISTSTSNPSPLSPSDGDLPAQHLGPRETPRTKASPNGCL) is disordered. Low complexity predominate over residues 11-35 (LLSNGSISTSTSNPSPLSPSDGDLP). N-linked (GlcNAc...) asparagine glycans are attached at residues Asn14 and Asn58. A helical transmembrane segment spans residues 189-209 (VVVLGMCTLLIVVCALVGVLV). Asn390 carries an N-linked (GlcNAc...) asparagine glycan. The 173-residue stretch at 485 to 657 (GIEFGIKHSL…VTWLPAVIVL (173 aa)) folds into the SSD domain. Helical transmembrane passes span 499 to 519 (LLMDTVYPAIAIAIVLLIMCV), 524 to 544 (MFITLMTMFAIISSLIVSYFL), and 548 to 568 (VFNFEFFPFMNLTALIILVGI). Asn581 carries N-linked (GlcNAc...) asparagine glycosylation. The next 8 helical transmembrane spans lie at 603–623 (AALSMFVTSFTTAAAFYANYV), 637–657 (GTAILVNYVLMVTWLPAVIVL), 717–737 (YLWLIWFLALTVGGAYIVCVN), 986–1006 (MGLSVAVAFSVMLLTTWNIII), 1008–1028 (LYAIVSIAGTIFVTVGSLVLL), 1038–1058 (VTISVAVGLSVDFAVHYGVAY), 1081–1101 (IAMAALTTFVAGAMMMPSTVL), and 1109–1129 (FMMLVMCVSWAFATFFFQCLC). Composition is skewed to polar residues over residues 1355–1364 (QENLGRTSTH) and 1418–1428 (TKSKVSGLPNQ). Residues 1355–1440 (QENLGRTSTH…KEEKQVEPSL (86 aa)) form a disordered region. Residue Asn1455 is glycosylated (N-linked (GlcNAc...) asparagine).

This sequence belongs to the dispatched family. Interacts with SHH; via the cholesterol anchor of the dually lipid-modified SHH (ShhNp).

The protein localises to the membrane. Functionally, functions in hedgehog (Hh) signaling. Regulates the release and extracellular accumulation of cholesterol-modified hedgehog proteins and is hence required for effective production of the Hh signal. Synergizes with SCUBE2 to cause an increase in SHH secretion. This chain is Protein dispatched homolog 1 (Disp1), found in Mus musculus (Mouse).